A 469-amino-acid chain; its full sequence is Gustatory receptor for sugar taste 64f (469 aa).

Over 1 to 117 (MKILPKLERK…SFSWRNIRTC (117 aa)) the chain is Cytoplasmic. The chain crosses the membrane as a helical span at residues 118 to 138 (FSLLFIASSLANFGLSLFKVL). Residues 139-146 (NNPISFNS) are Extracellular-facing. Residues 147-167 (IKPIIFRGSVLLVLIVALNLA) traverse the membrane as a helical segment. Topologically, residues 168–199 (RQWPQLMMYWHTVEKDLPQYKTQLTKWKMGHT) are cytoplasmic. The helical transmembrane segment at 200–220 (ISMVMLLGMMLSFAEHILSMV) threads the bilayer. Residues 221-265 (SAINYASFCNRTADPIQNYFLRTNDEIFFVTSYSTTLALWGKFQN) are Extracellular-facing. Asparagine 230 carries an N-linked (GlcNAc...) asparagine glycan. Residues 266–286 (VFSTFIWNYMDLFVMIVSIGL) traverse the membrane as a helical segment. The Cytoplasmic segment spans residues 287–330 (ASKFRQLNDDLRNFKGMNMAPSYWSERRIQYRNICILCDKMDDA). The helical transmembrane segment at 331–351 (ISLITMVSFSNNLYFICVQLL) threads the bilayer. Residues 352–353 (RS) lie on the Extracellular side of the membrane. Residues 354–374 (LNTMPSVAHAVYFYFSLIFLI) traverse the membrane as a helical segment. Topologically, residues 375 to 435 (GRTLAVSLYS…GMKFFHLTRK (61 aa)) are cytoplasmic. Residues 436 to 456 (LVLSVAGTIVTYELVLIQFHE) form a helical membrane-spanning segment. At 457–469 (DNDLWDCDQSYYS) the chain is on the extracellular side.

Belongs to the insect chemoreceptor superfamily. Gustatory receptor (GR) family. Gr5a subfamily. Expressed in Gr5a-expressing sugar-sensing cells.

It is found in the cell membrane. One of the few identified sugar gustatory receptors identified so far and which promotes the starvation-induced increase of feeding motivation. Required in combination with Gr64a to detect sucrose, maltose, and glucose. The polypeptide is Gustatory receptor for sugar taste 64f (Gr64f) (Drosophila melanogaster (Fruit fly)).